The sequence spans 1897 residues: uncharacterized protein (1897 aa).

The region spanning 1661-1888 (SDERVKTNIR…AKVISLESRL (228 aa)) is the Peptidase S74 domain. Residues 1865-1894 (AALQEIDRQLQLEKAKVISLESRLSALELK) adopt a coiled-coil conformation.

This is an uncharacterized protein from Micromonas pusilla (Picoplanktonic green alga).